Reading from the N-terminus, the 531-residue chain is Protein RPN4 (531 aa).

The segment at 338-432 (RFPSPSTSAN…PSAHTSSSDG (95 aa)) is disordered. Residues 341–354 (SPSTSANVPSTATT) show a composition bias toward polar residues. Over residues 362-375 (SSSNRSCVSNSNEN) the composition is skewed to low complexity. Residues 382–398 (KKPTSAVVSSNASRRKL) carry the Nuclear localization signal motif. A compositionally biased stretch (basic residues) spans 394 to 407 (SRRKLINYTKKHLS). Residues 408–430 (SHSSTNSNSKPSTASPSAHTSSS) show a composition bias toward low complexity.

Probably interacts with SEC63. Interacts with MUB1, UBR2 and RPN2. Ubiquitinated by UBR2 in the presence of UBC2; which leads to proteasomal degradation.

Its subcellular location is the nucleus. Its function is as follows. Acts as a transcriptional activator of a number of genes encoding proteasomal subunits. Binds to a PACE (proteasome-associated control element) DNA sequence 5'-GGTGGCAAA-3'. Its expression is in turn regulated by the 26S proteasome, thereby providing a negative feedback control mechanism. Required for normal growth at low temperatures. The protein is Protein RPN4 (RPN4) of Saccharomyces cerevisiae (strain ATCC 204508 / S288c) (Baker's yeast).